Reading from the N-terminus, the 472-residue chain is Glutamate--tRNA ligase 1 (472 aa).

Residues 13–23 (PSPTGYLHIGG) carry the 'HIGH' region motif. Residues C102, C104, C129, and E131 each coordinate Zn(2+). The 'KMSKS' region motif lies at 239–243 (RLSKR). ATP is bound at residue K242.

Belongs to the class-I aminoacyl-tRNA synthetase family. Glutamate--tRNA ligase type 1 subfamily. Monomer. Zn(2+) is required as a cofactor.

It is found in the cytoplasm. It catalyses the reaction tRNA(Glu) + L-glutamate + ATP = L-glutamyl-tRNA(Glu) + AMP + diphosphate. Functionally, catalyzes the attachment of glutamate to tRNA(Glu) in a two-step reaction: glutamate is first activated by ATP to form Glu-AMP and then transferred to the acceptor end of tRNA(Glu). The sequence is that of Glutamate--tRNA ligase 1 from Syntrophus aciditrophicus (strain SB).